A 152-amino-acid polypeptide reads, in one-letter code: Large ribosomal subunit protein bL9 (152 aa).

Belongs to the bacterial ribosomal protein bL9 family.

In terms of biological role, binds to the 23S rRNA. This Microcystis aeruginosa (strain NIES-843 / IAM M-2473) protein is Large ribosomal subunit protein bL9.